The chain runs to 322 residues: Daunorubicin resistance ATP-binding protein DrrA2 (322 aa).

The region spanning valine 6–valine 236 is the ABC transporter domain. Residue glycine 38 to threonine 45 coordinates ATP.

Belongs to the ABC transporter superfamily. Drug exporter-1 (DrugE1) (TC 3.A.1.105) family. As to quaternary structure, the complex is probably composed of two ATP-binding proteins (DrrA2) and two transmembrane proteins (DrrB2).

The protein resides in the cell membrane. The enzyme catalyses daunorubicin(in) + ATP + H2O = daunorubicin(out) + ADP + phosphate + H(+). Functionally, part of the ABC transporter complex DrrA2B2 involved in daunorubicin efflux. Responsible for energy coupling to the transport system. Confers self-resistance to daunorubicin, an antibiotic produced by S.coeruleorubidus. The chain is Daunorubicin resistance ATP-binding protein DrrA2 from Streptomyces coeruleorubidus.